The sequence spans 296 residues: GTPase Era (296 aa).

Residues 7 to 174 form the Era-type G domain; it reads RAGFVAIVGR…LDEIAAGLPQ (168 aa). A G1 region spans residues 15–22; it reads GRPNVGKS. 15–22 serves as a coordination point for GTP; it reads GRPNVGKS. The segment at 41–45 is G2; that stretch reads QTTRH. The segment at 62 to 65 is G3; that stretch reads DTPG. Residues 62–66 and 123–126 each bind GTP; these read DTPGF and SKID. The interval 123-126 is G4; that stretch reads SKID. The tract at residues 153-155 is G5; it reads VSA. The region spanning 205-281 is the KH type-2 domain; the sequence is VGDELPYGCT…HLEIYIKVRK (77 aa).

This sequence belongs to the TRAFAC class TrmE-Era-EngA-EngB-Septin-like GTPase superfamily. Era GTPase family. As to quaternary structure, monomer.

It is found in the cytoplasm. The protein localises to the cell inner membrane. In terms of biological role, an essential GTPase that binds both GDP and GTP, with rapid nucleotide exchange. Plays a role in 16S rRNA processing and 30S ribosomal subunit biogenesis and possibly also in cell cycle regulation and energy metabolism. The chain is GTPase Era from Bordetella parapertussis (strain 12822 / ATCC BAA-587 / NCTC 13253).